Here is a 639-residue protein sequence, read N- to C-terminus: Centromere protein T (639 aa).

Disordered stretches follow at residues 1 to 64, 266 to 294, 307 to 451, 458 to 477, and 494 to 534; these read MDGR…RPNA, QLSD…GLVS, SEKD…ERGT, AAEE…ESEE, and QPVL…TREP. Residues 12–23 show a composition bias toward low complexity; it reads RAAPTPRVAVRS. The flexible stalk domain stretch occupies residues 80-500; sequence IIQNQPQVSP…YRPQPVLSPP (421 aa). The span at 267–281 shows a compositional bias: polar residues; the sequence is LSDSKTSAQRSNTSY. Composition is skewed to basic and acidic residues over residues 307-319, 329-338, 356-371, and 432-449; these read SEKD…EHVD, QGEEEQDHSQ, TEHH…SEKK, and PGAK…EIER. Positions 458–469 are enriched in acidic residues; it reads AAEEEATDDESD.

Belongs to the CENP-T/CNN1 family. Component of the CENPA-CAD complex, composed of CENPI, CENPK, CENPL, CENPO, CENPP, CENPQ, CENPR and CENPS. The CENPA-CAD complex is probably recruited on centromeres by the CENPA-NAC complex, at least composed of CENPA, CENPC, CENPH, CENPM, CENPN, CENPT and CENPU. Identified in a centromeric complex containing histones H2A, H2B, H3 and H4, and at least CENPA, CENPB, CENPC, CENPT, CENPN, HJURP, SUPT16H, SSRP1 and RSF1. Interacts (via N-terminus) with the NDC80 complex. Heterodimer with CENPW; this dimer coassembles with CENPS-CENPX heterodimers at centromeres to form the tetrameric CENP-T-W-S-X complex.

It is found in the nucleus. It localises to the chromosome. The protein localises to the centromere. The protein resides in the kinetochore. Component of the CENPA-NAC (nucleosome-associated) complex, a complex that plays a central role in assembly of kinetochore proteins, mitotic progression and chromosome segregation. The CENPA-NAC complex recruits the CENPA-CAD (nucleosome distal) complex and may be involved in incorporation of newly synthesized CENPA into centromeres. Part of a nucleosome-associated complex that binds specifically to histone H3-containing nucleosomes at the centromere, as opposed to nucleosomes containing CENPA. Component of the heterotetrameric CENP-T-W-S-X complex that binds and supercoils DNA, and plays an important role in kinetochore assembly. CENPT has a fundamental role in kinetochore assembly and function. It is one of the inner kinetochore proteins, with most further proteins binding downstream. Required for normal chromosome organization and normal progress through mitosis. This is Centromere protein T (CENPT) from Gallus gallus (Chicken).